Here is a 412-residue protein sequence, read N- to C-terminus: uncharacterized protein (412 aa).

H49 lines the Zn(2+) pocket. E52 serves as the catalytic Proton acceptor. 2 residues coordinate Zn(2+): H53 and E129.

The protein belongs to the peptidase M16 family. Requires Zn(2+) as cofactor.

This is an uncharacterized protein from Rickettsia felis (strain ATCC VR-1525 / URRWXCal2) (Rickettsia azadi).